Reading from the N-terminus, the 353-residue chain is Glycerol-3-phosphate dehydrogenase [NAD(P)+] (353 aa).

3 residues coordinate NADPH: tryptophan 11, arginine 40, and lysine 115. Lysine 115, glycine 156, and serine 158 together coordinate sn-glycerol 3-phosphate. Residue alanine 160 coordinates NADPH. 5 residues coordinate sn-glycerol 3-phosphate: lysine 211, aspartate 264, serine 274, arginine 275, and asparagine 276. The active-site Proton acceptor is lysine 211. Arginine 275 contacts NADPH. Valine 299 and glutamate 301 together coordinate NADPH.

The protein belongs to the NAD-dependent glycerol-3-phosphate dehydrogenase family.

Its subcellular location is the cytoplasm. It catalyses the reaction sn-glycerol 3-phosphate + NAD(+) = dihydroxyacetone phosphate + NADH + H(+). The catalysed reaction is sn-glycerol 3-phosphate + NADP(+) = dihydroxyacetone phosphate + NADPH + H(+). Its pathway is membrane lipid metabolism; glycerophospholipid metabolism. Its function is as follows. Catalyzes the reduction of the glycolytic intermediate dihydroxyacetone phosphate (DHAP) to sn-glycerol 3-phosphate (G3P), the key precursor for phospholipid synthesis. The sequence is that of Glycerol-3-phosphate dehydrogenase [NAD(P)+] from Polaromonas sp. (strain JS666 / ATCC BAA-500).